A 307-amino-acid chain; its full sequence is Zinc transporter ZIP9 (307 aa).

The helical transmembrane segment at 4 to 24 (FISISLLSLAMLVGCYVAGII) threads the bilayer. The N-linked (GlcNAc...) asparagine glycan is linked to Asn29. 5 consecutive transmembrane segments (helical) span residues 35–55 (LKLV…AVIV), 106–126 (AYIG…DQIG), 146–166 (ITTT…LGAA), 176–196 (LIVF…LVSF), and 210–230 (HLLV…LGLS). Residue Asn241 is glycosylated (N-linked (GlcNAc...) asparagine). The next 2 helical transmembrane spans lie at 244–264 (GVAM…HVLP) and 286–306 (LEVA…VGHQ).

This sequence belongs to the ZIP transporter (TC 2.A.5) family. As to expression, highly expressed in pancreas, testis, and pituitary and moderately in the kidney, liver, uterus, heart, prostate, and brain, whereas expression is lower in the ovary and colon.

It localises to the golgi apparatus. It is found in the trans-Golgi network membrane. Its subcellular location is the cell membrane. The protein localises to the cytoplasm. The protein resides in the perinuclear region. It localises to the mitochondrion. It is found in the nucleus. It catalyses the reaction Zn(2+)(in) = Zn(2+)(out). Its function is as follows. Transports zinc ions across cell and organelle membranes into the cytoplasm and regulates intracellular zinc homeostasis. Participates in the zinc ions efflux out of the secretory compartments. Regulates intracellular zinc level, resulting in the enhancement of AKT1 and MAPK3/MAPK1 (Erk1/2) phosphorylation in response to the BCR activation. Also functions as a membrane androgen receptor that mediates, through a G protein, the non-classical androgen signaling pathway, characterized by the activation of MAPK3/MAPK1 (Erk1/2) and transcription factors CREB1 or ATF1. This pathway contributes to CLDN1 and CLDN5 expression and tight junction formation between adjacent Sertoli cells. Mediates androgen-induced vascular endothelial cell proliferation through activation of an inhibitory G protein leading to the AKT1 and MAPK3/MAPK1 (Erk1/2) activation which in turn modulate inhibition (phosphorylation) of GSK3B and CCND1 transcription. Moreover, has dual functions as a membrane-bound androgen receptor and as an androgen-dependent zinc transporter both of which are mediated through an inhibitory G protein (Gi) that mediates both MAP kinase and zinc signaling leading to the androgen-dependent apoptotic process. This chain is Zinc transporter ZIP9, found in Homo sapiens (Human).